The chain runs to 768 residues: 5-methyltetrahydropteroyltriglutamate--homocysteine methyltransferase (768 aa).

Residues 17-20 (RELK) and lysine 117 contribute to the 5-methyltetrahydropteroyltri-L-glutamate site. Residues 442 to 444 (IGS) and glutamate 495 contribute to the L-homocysteine site. L-methionine contacts are provided by residues 442 to 444 (IGS) and glutamate 495. 5-methyltetrahydropteroyltri-L-glutamate-binding positions include 526 to 527 (RC) and tryptophan 572. Residue aspartate 610 participates in L-homocysteine binding. Aspartate 610 serves as a coordination point for L-methionine. 5-methyltetrahydropteroyltri-L-glutamate is bound at residue glutamate 616. Zn(2+)-binding residues include histidine 653, cysteine 655, and glutamate 677. Histidine 706 functions as the Proton donor in the catalytic mechanism. Cysteine 738 lines the Zn(2+) pocket.

This sequence belongs to the vitamin-B12 independent methionine synthase family. The cofactor is Zn(2+).

The catalysed reaction is 5-methyltetrahydropteroyltri-L-glutamate + L-homocysteine = tetrahydropteroyltri-L-glutamate + L-methionine. The protein operates within amino-acid biosynthesis; L-methionine biosynthesis via de novo pathway; L-methionine from L-homocysteine (MetE route): step 1/1. Catalyzes the transfer of a methyl group from 5-methyltetrahydrofolate to homocysteine resulting in methionine formation. This chain is 5-methyltetrahydropteroyltriglutamate--homocysteine methyltransferase, found in Bifidobacterium adolescentis (strain ATCC 15703 / DSM 20083 / NCTC 11814 / E194a).